A 328-amino-acid polypeptide reads, in one-letter code: GMP reductase (328 aa).

Cys176 functions as the Thioimidate intermediate in the catalytic mechanism. 205-228 (IIADGGIRTHGDIAKSIRFGASMI) is an NADP(+) binding site.

It belongs to the IMPDH/GMPR family. GuaC type 2 subfamily.

The catalysed reaction is IMP + NH4(+) + NADP(+) = GMP + NADPH + 2 H(+). Catalyzes the irreversible NADPH-dependent deamination of GMP to IMP. It functions in the conversion of nucleobase, nucleoside and nucleotide derivatives of G to A nucleotides, and in maintaining the intracellular balance of A and G nucleotides. This chain is GMP reductase, found in Streptococcus pneumoniae (strain CGSP14).